Reading from the N-terminus, the 179-residue chain is Photosystem I assembly protein Ycf4 (179 aa).

A run of 2 helical transmembrane segments spans residues 21-41 (LISFSGGIGFLLAGLSSYLGV) and 59-79 (IVMTFYGTIGILLSLFLLLNI).

This sequence belongs to the Ycf4 family.

The protein resides in the plastid. Its subcellular location is the chloroplast thylakoid membrane. Seems to be required for the assembly of the photosystem I complex. The polypeptide is Photosystem I assembly protein Ycf4 (Rhodomonas salina (Cryptomonas salina)).